We begin with the raw amino-acid sequence, 96 residues long: Co-chaperonin GroES (96 aa).

The protein belongs to the GroES chaperonin family. As to quaternary structure, heptamer of 7 subunits arranged in a ring. Interacts with the chaperonin GroEL.

The protein localises to the cytoplasm. Its function is as follows. Together with the chaperonin GroEL, plays an essential role in assisting protein folding. The GroEL-GroES system forms a nano-cage that allows encapsulation of the non-native substrate proteins and provides a physical environment optimized to promote and accelerate protein folding. GroES binds to the apical surface of the GroEL ring, thereby capping the opening of the GroEL channel. The chain is Co-chaperonin GroES from Acinetobacter baylyi (strain ATCC 33305 / BD413 / ADP1).